The sequence spans 569 residues: CTP synthase (569 aa).

A Glutamine amidotransferase type-1 domain is found at 313 to 569 (RIAMVGKYTG…NASLERLKKM (257 aa)). Cys-410 serves as the catalytic Nucleophile. Catalysis depends on residues His-541 and Glu-543.

It belongs to the CTP synthase family.

The catalysed reaction is UTP + L-glutamine + ATP + H2O = CTP + L-glutamate + ADP + phosphate + 2 H(+). Its pathway is pyrimidine metabolism; CTP biosynthesis via de novo pathway; CTP from UDP: step 2/2. Catalyzes the ATP-dependent amination of UTP to CTP with either L-glutamine or ammonia as the source of nitrogen. This Dictyostelium discoideum (Social amoeba) protein is CTP synthase (ctps).